The sequence spans 341 residues: MPFPFGKSHKSPADIVKNLKESMAVLEKQDISDKKAEKATEEVSKNLVAMKEILYGTNEKEPQTEAVAQLAQELYNSGLLSTLVADLQLIDFEGKKDVAQIFNNILRRQIGTRTPTVEYICTQQNILFMLLKGYESPEIALNCGIMLRECIRHEPLAKIILWSEQFYDFFRYVEMSTFDIASDAFATFKDLLTRHKLLSAEFLEQHYDRFFSEYEKLLHSENYVTKRQSLKLLGELLLDRHNFTIMTKYISKPENLKLMMNLLRDKSRNIQFEAFHVFKVFVANPNKTQPILDILLKNQAKLIEFLSKFQNDRTEDEQFNDEKTYLVKQIRDLKRPAQQEA.

It belongs to the Mo25 family. In terms of assembly, component of a trimeric complex composed of STK11/LKB1, STRAD (STRADA or STRADB) and CAB39/MO25 (CAB39/MO25alpha or CAB39L/MO25beta): the complex tethers STK11/LKB1 in the cytoplasm and stimulates its catalytic activity.

It localises to the cytoplasm. Component of a complex that binds and activates STK11/LKB1. In the complex, required to stabilize the interaction between CAB39/MO25 (CAB39/MO25alpha or CAB39L/MO25beta) and STK11/LKB1. The chain is Calcium-binding protein 39 (CAB39) from Bos taurus (Bovine).